Here is a 98-residue protein sequence, read N- to C-terminus: NADH-ubiquinone oxidoreductase chain 4L (98 aa).

3 helical membrane-spanning segments follow: residues methionine 1–methionine 21, alanine 29–leucine 49, and isoleucine 61–valine 81.

This sequence belongs to the complex I subunit 4L family. As to quaternary structure, core subunit of respiratory chain NADH dehydrogenase (Complex I) which is composed of 45 different subunits.

It is found in the mitochondrion inner membrane. It carries out the reaction a ubiquinone + NADH + 5 H(+)(in) = a ubiquinol + NAD(+) + 4 H(+)(out). Core subunit of the mitochondrial membrane respiratory chain NADH dehydrogenase (Complex I) which catalyzes electron transfer from NADH through the respiratory chain, using ubiquinone as an electron acceptor. Part of the enzyme membrane arm which is embedded in the lipid bilayer and involved in proton translocation. The sequence is that of NADH-ubiquinone oxidoreductase chain 4L (MT-ND4L) from Balaenoptera borealis (Sei whale).